We begin with the raw amino-acid sequence, 191 residues long: uncharacterized protein (191 aa).

This is an uncharacterized protein from Histophilus somni (Haemophilus somnus).